The primary structure comprises 230 residues: 2,3-bisphosphoglycerate-dependent phosphoglycerate mutase (230 aa).

Substrate is bound by residues 8–15 (RHGESEWN), 21–22 (TG), Arg-60, 87–90 (ERHY), Lys-98, 114–115 (RR), and 183–184 (GN). His-9 (tele-phosphohistidine intermediate) is an active-site residue. Glu-87 serves as the catalytic Proton donor/acceptor.

This sequence belongs to the phosphoglycerate mutase family. BPG-dependent PGAM subfamily.

The enzyme catalyses (2R)-2-phosphoglycerate = (2R)-3-phosphoglycerate. It functions in the pathway carbohydrate degradation; glycolysis; pyruvate from D-glyceraldehyde 3-phosphate: step 3/5. In terms of biological role, catalyzes the interconversion of 2-phosphoglycerate and 3-phosphoglycerate. The protein is 2,3-bisphosphoglycerate-dependent phosphoglycerate mutase of Streptococcus sanguinis (strain SK36).